A 492-amino-acid polypeptide reads, in one-letter code: Ribose import ATP-binding protein RbsA (492 aa).

2 ABC transporter domains span residues 3 to 239 (IEMK…VGRS) and 249 to 492 (AEIR…TGGK). 35 to 42 (GENGAGKS) lines the ATP pocket.

It belongs to the ABC transporter superfamily. Ribose importer (TC 3.A.1.2.1) family. As to quaternary structure, the complex is composed of an ATP-binding protein (RbsA), two transmembrane proteins (RbsC) and a solute-binding protein (RbsB).

Its subcellular location is the cell membrane. It catalyses the reaction D-ribose(out) + ATP + H2O = D-ribose(in) + ADP + phosphate + H(+). Functionally, part of the ABC transporter complex RbsABC involved in ribose import. Responsible for energy coupling to the transport system. The sequence is that of Ribose import ATP-binding protein RbsA from Lactococcus lactis subsp. cremoris (strain SK11).